Consider the following 332-residue polypeptide: MNSFGRLFRVNVFGESHGASVGVNIDGIPAGIPLTQEDFLPDLERRKAGAKGTTPRKEEDLPFIKSGVFNDHTTGAPITILFENNNTRSTDYEKLREFPRPGHADFVATHKYGGFEDYRGGGHFSGRLTLNLVAAGVIAKKILGPGISVKATLKEVAGLPDAEQGLEAAIAAKDSVGGIVECVVEGLPIGLGEPFFDSVESTIAHAVFSIPAIKGIEFGAGFAAARMKGVEHNDAILDASGKTATNHAGGVVGGITNGNPLVFRVAVKPTSSTPKEQHTLNIKSGEVENFSVKGRHDLCIALRVPVVLEAVAAMALADFMLLEQRSNRVFKN.

Position 46 (Arg-46) interacts with NADP(+). FMN-binding positions include 123-125, Gly-253, 268-272, and Arg-295; these read HFS and KPTSS.

The protein belongs to the chorismate synthase family. As to quaternary structure, homotetramer. The cofactor is FMNH2.

The catalysed reaction is 5-O-(1-carboxyvinyl)-3-phosphoshikimate = chorismate + phosphate. It participates in metabolic intermediate biosynthesis; chorismate biosynthesis; chorismate from D-erythrose 4-phosphate and phosphoenolpyruvate: step 7/7. Its function is as follows. Catalyzes the anti-1,4-elimination of the C-3 phosphate and the C-6 proR hydrogen from 5-enolpyruvylshikimate-3-phosphate (EPSP) to yield chorismate, which is the branch point compound that serves as the starting substrate for the three terminal pathways of aromatic amino acid biosynthesis. This reaction introduces a second double bond into the aromatic ring system. The polypeptide is Chorismate synthase (Chitinophaga pinensis (strain ATCC 43595 / DSM 2588 / LMG 13176 / NBRC 15968 / NCIMB 11800 / UQM 2034)).